A 155-amino-acid polypeptide reads, in one-letter code: 17.3 kDa class II heat shock protein (155 aa).

Positions 39–155 (DAKAMAATPA…KPKTIEVKVA (117 aa)) constitute a sHSP domain.

It belongs to the small heat shock protein (HSP20) family.

It is found in the cytoplasm. The chain is 17.3 kDa class II heat shock protein from Solanum peruvianum (Peruvian tomato).